The primary structure comprises 542 residues: Chaperonin GroEL 3 (542 aa).

ATP contacts are provided by residues 30–33, Lys51, 87–91, Gly415, and Asp496; these read TLGP and DGTTT.

It belongs to the chaperonin (HSP60) family. In terms of assembly, forms a cylinder of 14 subunits composed of two heptameric rings stacked back-to-back. Interacts with the co-chaperonin GroES.

It is found in the cytoplasm. It carries out the reaction ATP + H2O + a folded polypeptide = ADP + phosphate + an unfolded polypeptide.. In terms of biological role, together with its co-chaperonin GroES, plays an essential role in assisting protein folding. The GroEL-GroES system forms a nano-cage that allows encapsulation of the non-native substrate proteins and provides a physical environment optimized to promote and accelerate protein folding. In Sinorhizobium medicae (strain WSM419) (Ensifer medicae), this protein is Chaperonin GroEL 3.